The chain runs to 174 residues: Co-chaperone protein HscB homolog (174 aa).

The J domain maps to Asn2–Leu74.

It belongs to the HscB family. As to quaternary structure, interacts with HscA and stimulates its ATPase activity.

Its function is as follows. Co-chaperone involved in the maturation of iron-sulfur cluster-containing proteins. Seems to help targeting proteins to be folded toward HscA. In Shewanella sp. (strain W3-18-1), this protein is Co-chaperone protein HscB homolog.